A 294-amino-acid chain; its full sequence is 33 kDa chaperonin (294 aa).

Disulfide bonds link C238–C240 and C271–C274.

It belongs to the HSP33 family. In terms of processing, under oxidizing conditions two disulfide bonds are formed involving the reactive cysteines. Under reducing conditions zinc is bound to the reactive cysteines and the protein is inactive.

It is found in the cytoplasm. In terms of biological role, redox regulated molecular chaperone. Protects both thermally unfolding and oxidatively damaged proteins from irreversible aggregation. Plays an important role in the bacterial defense system toward oxidative stress. This Clostridium tetani (strain Massachusetts / E88) protein is 33 kDa chaperonin.